A 358-amino-acid polypeptide reads, in one-letter code: Neutral protease 2 homolog PADG_00776 (358 aa).

An N-terminal signal peptide occupies residues 1–19 (MRRVSGILAVAAFTISAFA). Residues 20–185 (GVIQPVAKDA…MNQFVKIAKL (166 aa)) constitute a propeptide that is removed on maturation. Cystine bridges form between C188–C259 and C266–C284. N249 carries an N-linked (GlcNAc...) asparagine glycan. H309 serves as a coordination point for Zn(2+). E310 is an active-site residue. 2 residues coordinate Zn(2+): H313 and D324.

Belongs to the peptidase M35 family. Requires Zn(2+) as cofactor.

The protein localises to the secreted. It carries out the reaction Preferential cleavage of bonds with hydrophobic residues in P1'. Also 3-Asn-|-Gln-4 and 8-Gly-|-Ser-9 bonds in insulin B chain.. Its function is as follows. Secreted metalloproteinase that allows assimilation of proteinaceous substrates. Shows high activities on basic nuclear substrates such as histone and protamine. The sequence is that of Neutral protease 2 homolog PADG_00776 from Paracoccidioides brasiliensis (strain Pb18).